We begin with the raw amino-acid sequence, 108 residues long: MGVTVENISAGDGKTFPQPGDSVTIHYVGTLLDGSKFDSSRDRGTPFVCRIGQGQVIRGWDEGVPQLSIGQKANLICTPDYAYGARGFPPVIPPNSTLKFEVELLKIN.

The PPIase FKBP-type domain occupies 20 to 108; that stretch reads GDSVTIHYVG…KFEVELLKIN (89 aa).

This sequence belongs to the FKBP-type PPIase family. FKBP1 subfamily.

The protein localises to the cytoplasm. It carries out the reaction [protein]-peptidylproline (omega=180) = [protein]-peptidylproline (omega=0). Its activity is regulated as follows. Inhibited by both FK506 and rapamycin. Functionally, PPIases accelerate the folding of proteins. It catalyzes the cis-trans isomerization of proline imidic peptide bonds in oligopeptides. The polypeptide is FK506-binding protein 1 (FPR1) (Cryptococcus neoformans var. neoformans serotype D (strain JEC21 / ATCC MYA-565) (Filobasidiella neoformans)).